The sequence spans 426 residues: Squamosa promoter-binding-like protein 10 (426 aa).

The SBP-type zinc finger occupies 178–255; sequence PPRCQAEGCK…AEHNRRRRKP (78 aa). Zn(2+) contacts are provided by cysteine 181, cysteine 186, cysteine 203, histidine 206, cysteine 222, cysteine 225, histidine 229, and cysteine 241. Positions 238–254 match the Bipartite nuclear localization signal motif; the sequence is KRSCRKRLAEHNRRRRK. 2 stretches are compositionally biased toward low complexity: residues 268–287 and 401–417; these read DAAA…AATS and SDQN…NNNN. Disordered regions lie at residues 268 to 290 and 392 to 426; these read DAAA…SYTG and PSTA…VDFM.

Expressed in stems, leaf sheaths, and young panicles.

It localises to the nucleus. In terms of biological role, trans-acting factor that binds specifically to the consensus nucleotide sequence 5'-TNCGTACAA-3'. The chain is Squamosa promoter-binding-like protein 10 (SPL10) from Oryza sativa subsp. indica (Rice).